Here is a 64-residue protein sequence, read N- to C-terminus: Translation machinery-associated protein 7 homolog (64 aa).

The disordered stretch occupies residues 1-64; that stretch reads MSGREGGKKK…QGGIKKSGKK (64 aa). A coiled-coil region spans residues 21 to 50; that stretch reads EMDEDTAAFKAKQKEQQKALEAAKQKATKG. Basic and acidic residues predominate over residues 32 to 44; it reads KQKEQQKALEAAK.

It belongs to the TMA7 family.

This is Translation machinery-associated protein 7 homolog from Anopheles gambiae (African malaria mosquito).